Here is a 411-residue protein sequence, read N- to C-terminus: 6-hydroxytryprostatin B O-methyltransferase (411 aa).

S-adenosyl-L-methionine is bound at residue D270. H313 acts as the Proton acceptor in catalysis.

This sequence belongs to the class I-like SAM-binding methyltransferase superfamily. Cation-independent O-methyltransferase family. As to quaternary structure, homodimer.

It carries out the reaction 6-hydroxytryprostatin B + S-adenosyl-L-methionine = tryprostatin A + S-adenosyl-L-homocysteine + H(+). It participates in alkaloid biosynthesis. In terms of biological role, 6-hydroxytryprostatin B O-methyltransferase; part of the gene cluster that mediates the biosynthesis of fumitremorgins, indole alkaloids that carry not only intriguing chemical structures, but also interesting biological and pharmacological activities. The biosynthesis of fumitremorgin-type alkaloids begins by condensation of the two amino acids L-tryptophan and L-proline to brevianamide F, catalyzed by the non-ribosomal peptide synthetase ftmPS/ftmA. Brevianamide F is then prenylated by the prenyltransferase ftmPT1/ftmB in the presence of dimethylallyl diphosphate, resulting in the formation of tryprostatin B. The three cytochrome P450 monooxygenases, ftmP450-1/ftmC, ftmP450-2/ftmE and ftmP450-3/FtmG, are responsible for the conversion of tryprostatin B to 6-hydroxytryprostatin B, tryprostatin A to fumitremorgin C and fumitremorgin C to 12,13-dihydroxyfumitremorgin C, respectively. The putative methyltransferase ftmMT/ftmD is expected for the conversion of 6-hydroxytryprostatin B to tryprostatin A. FtmPT2/FtmH catalyzes the prenylation of 12,13-dihydroxyfumitre-morgin C in the presence of dimethylallyl diphosphate, resulting in the formation of fumitremorgin B. Fumitremorgin B is further converted to verruculogen by ftmOx1/ftmF via the insertion of an endoperoxide bond between the two prenyl moieties. Finally, verruculogen is further converted to fumitremorgin A by the verruculogen prenyltransferase ftmPT3. The chain is 6-hydroxytryprostatin B O-methyltransferase from Neosartorya fischeri (strain ATCC 1020 / DSM 3700 / CBS 544.65 / FGSC A1164 / JCM 1740 / NRRL 181 / WB 181) (Aspergillus fischerianus).